Consider the following 577-residue polypeptide: Arginine--tRNA ligase (577 aa).

The short motif at 122 to 132 (PNVAKEMHVGH) is the 'HIGH' region element.

The protein belongs to the class-I aminoacyl-tRNA synthetase family. In terms of assembly, monomer.

It is found in the cytoplasm. The enzyme catalyses tRNA(Arg) + L-arginine + ATP = L-arginyl-tRNA(Arg) + AMP + diphosphate. In Shigella dysenteriae serotype 1 (strain Sd197), this protein is Arginine--tRNA ligase.